The primary structure comprises 139 residues: ATP synthase epsilon chain (139 aa).

Belongs to the ATPase epsilon chain family. In terms of assembly, F-type ATPases have 2 components, CF(1) - the catalytic core - and CF(0) - the membrane proton channel. CF(1) has five subunits: alpha(3), beta(3), gamma(1), delta(1), epsilon(1). CF(0) has three main subunits: a, b and c.

The protein resides in the cell inner membrane. Functionally, produces ATP from ADP in the presence of a proton gradient across the membrane. This chain is ATP synthase epsilon chain, found in Haemophilus ducreyi (strain 35000HP / ATCC 700724).